The following is a 115-amino-acid chain: Aspartate 1-decarboxylase (115 aa).

The active-site Schiff-base intermediate with substrate; via pyruvic acid is Ser25. Ser25 is subject to Pyruvic acid (Ser). Thr57 lines the substrate pocket. Tyr58 (proton donor) is an active-site residue. 73–75 (GPA) provides a ligand contact to substrate.

Belongs to the PanD family. As to quaternary structure, heterooctamer of four alpha and four beta subunits. Pyruvate serves as cofactor. In terms of processing, is synthesized initially as an inactive proenzyme, which is activated by self-cleavage at a specific serine bond to produce a beta-subunit with a hydroxyl group at its C-terminus and an alpha-subunit with a pyruvoyl group at its N-terminus.

It is found in the cytoplasm. It catalyses the reaction L-aspartate + H(+) = beta-alanine + CO2. The protein operates within cofactor biosynthesis; (R)-pantothenate biosynthesis; beta-alanine from L-aspartate: step 1/1. In terms of biological role, catalyzes the pyruvoyl-dependent decarboxylation of aspartate to produce beta-alanine. This is Aspartate 1-decarboxylase from Cytophaga hutchinsonii (strain ATCC 33406 / DSM 1761 / CIP 103989 / NBRC 15051 / NCIMB 9469 / D465).